A 142-amino-acid chain; its full sequence is Hemoglobin subunit alpha (142 aa).

A Globin domain is found at 2 to 142 (VLSPADKTNV…VSTVLTSKYR (141 aa)). At serine 4 the chain carries Phosphoserine. Lysine 8 bears the N6-succinyllysine mark. Threonine 9 carries the phosphothreonine modification. The residue at position 12 (lysine 12) is an N6-succinyllysine. Lysine 17 is subject to N6-acetyllysine; alternate. An N6-succinyllysine; alternate modification is found at lysine 17. Tyrosine 25 carries the post-translational modification Phosphotyrosine. Position 36 is a phosphoserine (serine 36). Lysine 41 carries the N6-succinyllysine modification. At serine 50 the chain carries Phosphoserine. Position 59 (histidine 59) interacts with O2. A heme b-binding site is contributed by histidine 88. Serine 103 is modified (phosphoserine). Threonine 109 carries the phosphothreonine modification. Serine 125 and serine 132 each carry phosphoserine. Phosphothreonine is present on residues threonine 135 and threonine 138. Serine 139 bears the Phosphoserine mark.

It belongs to the globin family. As to quaternary structure, heterotetramer of two alpha chains and two beta chains. Red blood cells.

Involved in oxygen transport from the lung to the various peripheral tissues. Its function is as follows. Hemopressin acts as an antagonist peptide of the cannabinoid receptor CNR1. Hemopressin-binding efficiently blocks cannabinoid receptor CNR1 and subsequent signaling. The protein is Hemoglobin subunit alpha (HBA) of Piliocolobus badius (Western red colobus).